Here is a 439-residue protein sequence, read N- to C-terminus: CBL-interacting protein kinase 14 (439 aa).

In terms of domain architecture, Protein kinase spans 12 to 267 (YELGRLLGKG…IQKIKESTWF (256 aa)). Residues 18-26 (LGKGTFGKV) and lysine 41 each bind ATP. The Proton acceptor role is filled by aspartate 135. An activation loop region spans residues 153–182 (DFGLSALSESKRQDGLLHTTCGTPAYVAPE). In terms of domain architecture, NAF spans 298–333 (RKKNAHEDVKPMSVTNLNAFEIISFSKGFDLSGMFI). The tract at residues 338 to 367 (RNEARFTSDKSASTIISKLEDVAKALNLRV) is PPI.

Belongs to the protein kinase superfamily. CAMK Ser/Thr protein kinase family. SNF1 subfamily. The cofactor is Mn(2+).

It carries out the reaction L-seryl-[protein] + ATP = O-phospho-L-seryl-[protein] + ADP + H(+). The catalysed reaction is L-threonyl-[protein] + ATP = O-phospho-L-threonyl-[protein] + ADP + H(+). Its function is as follows. CIPK serine-threonine protein kinases interact with CBL proteins. Binding of a CBL protein to the regulatory NAF domain of CIPK protein lead to the activation of the kinase in a calcium-dependent manner. In Oryza sativa subsp. japonica (Rice), this protein is CBL-interacting protein kinase 14 (CIPK14).